The primary structure comprises 364 residues: Zinc finger protein 474 (364 aa).

The span at 1–10 shows a compositional bias: basic residues; the sequence is MERGKKKRIS. Disordered regions lie at residues 1–21 and 37–60; these read MERGKKKRISNKLQQTFHHSK and SYSSLSPETESVNPGENIKTDTQK. Residues 93–122 form a C2HC/C3H-type 1 zinc finger; the sequence is GFRVCYICGREFGSQSIAIHEPQCLQKWHI. Zn(2+) is bound by residues Cys-97, Cys-100, His-112, and Cys-116. The disordered stretch occupies residues 127–147; sequence LPKHLRRPEPSKPQSLSSSGS. The span at 138-147 shows a compositional bias: low complexity; that stretch reads KPQSLSSSGS. 3 C2HC/C3H-type zinc fingers span residues 164 to 193, 220 to 249, and 283 to 312; these read QLLPCESCGRTFLPDHLLVHHRSCKPKGEG, RTVICYICGKEFGTLSLPIHEPKCLEKWKM, and QLVFCPHCSRIFTSDRLLVHQRSCKTHPYG. Cys-168, Cys-171, His-183, Cys-187, Cys-224, Cys-227, His-239, Cys-243, Cys-287, Cys-290, His-302, and Cys-306 together coordinate Zn(2+). Positions 187–214 are disordered; it reads CKPKGEGPRAPHSNSSDHLTGLKKACSG.

It depends on Zn(2+) as a cofactor.

The sequence is that of Zinc finger protein 474 (ZNF474) from Homo sapiens (Human).